The sequence spans 325 residues: Coiled-coil domain-containing protein 160 (325 aa).

Disordered stretches follow at residues 18-45 (SAQD…KGME) and 81-123 (ENKR…CSTD). Over residues 81–91 (ENKRNISKNET) the composition is skewed to basic and acidic residues. Over residues 92 to 123 (DTNSASYESSNVDVTTEESFNSTEDNSTCSTD) the composition is skewed to polar residues. Residues 144 to 288 (KLCLNLLNEE…SVIKNELRTE (145 aa)) adopt a coiled-coil conformation.

Belongs to the CCDC160 family.

This is Coiled-coil domain-containing protein 160 (CCDC160) from Homo sapiens (Human).